The primary structure comprises 367 residues: Probable butyrate kinase (367 aa).

The protein belongs to the acetokinase family.

The protein localises to the cytoplasm. The catalysed reaction is butanoate + ATP = butanoyl phosphate + ADP. The polypeptide is Probable butyrate kinase (Bacillus anthracis (strain A0248)).